A 103-amino-acid chain; its full sequence is L-rhamnose mutarotase (103 aa).

Tyrosine 18 provides a ligand contact to substrate. Histidine 22 serves as the catalytic Proton donor. Residues tyrosine 41 and 76–77 each bind substrate; that span reads WW.

Belongs to the rhamnose mutarotase family. Homodimer.

It is found in the cytoplasm. The enzyme catalyses alpha-L-rhamnose = beta-L-rhamnose. The protein operates within carbohydrate metabolism; L-rhamnose metabolism. Involved in the anomeric conversion of L-rhamnose. The sequence is that of L-rhamnose mutarotase from Enterococcus faecalis (strain ATCC 700802 / V583).